A 400-amino-acid chain; its full sequence is Methylthioribose kinase (400 aa).

ATP contacts are provided by residues Asn-44, Lys-61, and 115–117; that span reads EDL. Asp-233 contacts substrate. 250–252 is a binding site for ATP; it reads DPE. Arg-340 contacts substrate.

Belongs to the methylthioribose kinase family. In terms of assembly, homodimer.

The catalysed reaction is 5-(methylsulfanyl)-D-ribose + ATP = 5-(methylsulfanyl)-alpha-D-ribose 1-phosphate + ADP + H(+). It participates in amino-acid biosynthesis; L-methionine biosynthesis via salvage pathway; S-methyl-5-thio-alpha-D-ribose 1-phosphate from S-methyl-5'-thioadenosine (hydrolase route): step 2/2. Functionally, catalyzes the phosphorylation of methylthioribose into methylthioribose-1-phosphate. The sequence is that of Methylthioribose kinase from Geobacillus sp. (strain WCH70).